We begin with the raw amino-acid sequence, 1383 residues long: DNA-directed RNA polymerase subunit beta (1383 aa).

Belongs to the RNA polymerase beta chain family. In terms of assembly, the RNAP catalytic core consists of 2 alpha, 1 beta, 1 beta' and 1 omega subunit. When a sigma factor is associated with the core the holoenzyme is formed, which can initiate transcription.

It catalyses the reaction RNA(n) + a ribonucleoside 5'-triphosphate = RNA(n+1) + diphosphate. DNA-dependent RNA polymerase catalyzes the transcription of DNA into RNA using the four ribonucleoside triphosphates as substrates. This is DNA-directed RNA polymerase subunit beta from Bartonella henselae (strain ATCC 49882 / DSM 28221 / CCUG 30454 / Houston 1) (Rochalimaea henselae).